The chain runs to 379 residues: Putative nucleosome assembly protein C2D10.11C (379 aa).

Basic and acidic residues predominate over residues 1–10; sequence MSKGPGDFKK. Disordered stretches follow at residues 1-30 and 345-379; these read MSKGPGDFKKSWNGFAAQTPQNTPSSDVHL and SDFNQMDEEDSEDAYTDEEDLSSDDEEILSSEISD. Residues 16 to 28 are compositionally biased toward polar residues; the sequence is AAQTPQNTPSSDV.

Belongs to the nucleosome assembly protein (NAP) family.

It is found in the nucleus. The polypeptide is Putative nucleosome assembly protein C2D10.11C (Schizosaccharomyces pombe (strain 972 / ATCC 24843) (Fission yeast)).